Reading from the N-terminus, the 267-residue chain is MSFVEELGARIEAADSVVSVGLDPDMERLPEDVQDAELPRWAFNRRIIDATHEHAAVFKPNAAFYEDSDGWRALRETVAYAHGKGVPVLLDAKRADIGNTARQYAEILAHVDAITVNPYLGEDALQPFLTQDEAGVFVLCRTSNEGGMDFQHLELAAYDRRLYEHVAERAAEWNAQYGDVGLVVGATAPDELQAIRERVPELPFLVPGVGAQGGDAEAAVEYGLNDDGVGLVNSTRGVIFAGEHGSAWAAAAGDAARTLRERLNRHR.

Catalysis depends on lysine 93, which acts as the Proton donor.

The protein belongs to the OMP decarboxylase family. Type 2 subfamily.

The catalysed reaction is orotidine 5'-phosphate + H(+) = UMP + CO2. The protein operates within pyrimidine metabolism; UMP biosynthesis via de novo pathway; UMP from orotate: step 2/2. This Halobacterium salinarum (strain ATCC 29341 / DSM 671 / R1) protein is Orotidine 5'-phosphate decarboxylase.